Consider the following 471-residue polypeptide: GTPase Der (471 aa).

2 consecutive EngA-type G domains span residues 3 to 166 and 177 to 350; these read PTLA…EPEA and IKLA…SSAT. Residues 9 to 16, 56 to 60, 118 to 121, 183 to 190, 230 to 234, and 295 to 298 each bind GTP; these read GRPNVGKS, DTGGI, NKVD, DTAGV, and NKWD. A KH-like domain is found at 351 to 435; the sequence is EKLNTNFLTK…PIRFEFKSSE (85 aa). The interval 432–471 is disordered; sequence KSSENPFAGRKNAMSKKPEHPSRRANSGGKSINRRPRPKS.

It belongs to the TRAFAC class TrmE-Era-EngA-EngB-Septin-like GTPase superfamily. EngA (Der) GTPase family. Associates with the 50S ribosomal subunit.

GTPase that plays an essential role in the late steps of ribosome biogenesis. The polypeptide is GTPase Der (Saccharophagus degradans (strain 2-40 / ATCC 43961 / DSM 17024)).